The chain runs to 277 residues: Elongation factor Ts (277 aa).

Positions 81–84 (TDFV) are involved in Mg(2+) ion dislocation from EF-Tu.

The protein belongs to the EF-Ts family.

It localises to the cytoplasm. In terms of biological role, associates with the EF-Tu.GDP complex and induces the exchange of GDP to GTP. It remains bound to the aminoacyl-tRNA.EF-Tu.GTP complex up to the GTP hydrolysis stage on the ribosome. The chain is Elongation factor Ts from Amoebophilus asiaticus (strain 5a2).